The following is a 513-amino-acid chain: Light-independent protochlorophyllide reductase subunit B (513 aa).

D36 provides a ligand contact to [4Fe-4S] cluster. Residue D299 is the Proton donor of the active site. 434–435 (GM) contacts substrate.

This sequence belongs to the ChlB/BchB/BchZ family. In terms of assembly, protochlorophyllide reductase is composed of three subunits; ChlL, ChlN and ChlB. Forms a heterotetramer of two ChlB and two ChlN subunits. [4Fe-4S] cluster is required as a cofactor.

The protein localises to the plastid. The protein resides in the chloroplast. The enzyme catalyses chlorophyllide a + oxidized 2[4Fe-4S]-[ferredoxin] + 2 ADP + 2 phosphate = protochlorophyllide a + reduced 2[4Fe-4S]-[ferredoxin] + 2 ATP + 2 H2O. Its pathway is porphyrin-containing compound metabolism; chlorophyll biosynthesis (light-independent). In terms of biological role, component of the dark-operative protochlorophyllide reductase (DPOR) that uses Mg-ATP and reduced ferredoxin to reduce ring D of protochlorophyllide (Pchlide) to form chlorophyllide a (Chlide). This reaction is light-independent. The NB-protein (ChlN-ChlB) is the catalytic component of the complex. This Cycas taitungensis (Prince sago) protein is Light-independent protochlorophyllide reductase subunit B.